The following is a 395-amino-acid chain: Immunity-related GTPase family M protein 2 (395 aa).

The region spanning 63-239 (NKIKIAVTGD…PKLRETLQKD (177 aa)) is the IRG-type G domain. GTP-binding positions include 72–79 (DSGNGMSS), 97–101 (TGVVR), and 179–181 (KLD).

The protein belongs to the TRAFAC class dynamin-like GTPase superfamily. IRG family. In terms of processing, ubiquitinated; polyubiquitinated in the cytosol, promoting Gbp1 recruitment to the T.gondii parasitophorous vacuole membranes.

Its subcellular location is the cytoplasmic vesicle membrane. The protein localises to the golgi apparatus membrane. The protein resides in the cytoplasm. It is found in the cytosol. It carries out the reaction GTP + H2O = GDP + phosphate + H(+). Immunity-related GTPase that plays important roles in innate immunity and inflammatory response. Acts as a dynamin-like protein that binds to intracellular membranes and promotes remodeling and trafficking of those membranes. Required for clearance of acute protozoan and bacterial infections. Acts by participating to Tgtp1/Irgb6 and Gbp1-mediated parasite killing by promoting their accumulation on the T.gondii parasitophorous vacuole membranes. Also required for prolonged loading of ubiquitin and p62/Sqstm1 to parasitophorous vacuole membranes. Also acts as a key negative regulator of the inflammatory response by inhibiting the non-canonical inflammasome, thereby protecting against Casp11-driven septic shock during endotoxemia. In Mus musculus (Mouse), this protein is Immunity-related GTPase family M protein 2.